The chain runs to 739 residues: BEL1-like homeodomain protein 2 (739 aa).

Disordered regions lie at residues 23-73 and 143-222; these read SQDY…ESSV and LMNP…NSQT. Polar residues predominate over residues 41 to 58; the sequence is NFSNGFDRSDSPNLTTQQ. The span at 145–155 shows a compositional bias: pro residues; sequence NPPPPQQPPSP. The segment covering 179 to 190 has biased composition (low complexity); that stretch reads TNTTHHQNYTNH. The segment at 316 to 332 is SR/KY domain; sequence SRYTTAAQELLEEFCSV. Positions 341-378 are disordered; that stretch reads KLGNSSNPNTCGGDGGGSSPSSAGANKEHPPLSASDRI. The BELL domain stretch occupies residues 376-447; it reads DRIEHQRRKV…CLKDAVAAQL (72 aa). The homeobox DNA-binding region spans 498-560; that stretch reads AWRPQRGLPE…NARVRLWKPM (63 aa). A disordered region spans residues 567–627; that stretch reads QESKEREREE…TAPDASDADA (61 aa). Over residues 576 to 585 the composition is skewed to acidic residues; that stretch reads EELEENEEDQ. A compositionally biased stretch (basic and acidic residues) spans 586 to 596; sequence ETKNSNDDKST. Over residues 597-627 the composition is skewed to low complexity; the sequence is KSNNNESNFTAVRTTSQTPTTTAPDASDADA.

Belongs to the TALE/BELL homeobox family. In terms of assembly, may form heterodimeric complexes with TALE/KNOX proteins STM, KNAT1/BP, KNAT2 and KNAT5. Interacts with OFP1, OFP2, OFP4 and OFP5. Interacts with KNATM, isoform KNATM-B. As to expression, expressed in lateral organs.

It localises to the nucleus. Transcription factor that establishes leaf shape by repressing growth in specific subdomains of the leaf. Negatively regulates knox homeobox gene KNAT1/BP expression. This is BEL1-like homeodomain protein 2 (BLH2) from Arabidopsis thaliana (Mouse-ear cress).